A 400-amino-acid polypeptide reads, in one-letter code: Diphosphomevalonate decarboxylase (400 aa).

N-acetylalanine is present on Ala-2. (R)-5-diphosphomevalonate-binding positions include 23–26, Arg-78, 156–161, and Thr-212; these read YWGK and SGSACR.

Belongs to the diphosphomevalonate decarboxylase family. In terms of assembly, homodimer.

It is found in the cytoplasm. The catalysed reaction is (R)-5-diphosphomevalonate + ATP = isopentenyl diphosphate + ADP + phosphate + CO2. It participates in steroid biosynthesis; cholesterol biosynthesis. In terms of biological role, catalyzes the ATP dependent decarboxylation of (R)-5-diphosphomevalonate to form isopentenyl diphosphate (IPP). Functions in the mevalonate (MVA) pathway leading to isopentenyl diphosphate (IPP), a key precursor for the biosynthesis of isoprenoids and sterol synthesis. The chain is Diphosphomevalonate decarboxylase (MVD) from Bos taurus (Bovine).